Consider the following 344-residue polypeptide: MIEINRVNKVFYQGERAINALSDINLTIEQGTIFGVIGSSGAGKSTLIRCVNLLERPTSGHIIVDGVDLTQLSNKELSLARRKIGMIFQHFNLLSSRTVFENVALPLELAGASNNAIKEKVDGLLKLVGLSDKNDTYPCNLSGGQKQRVAIARALASDPKVLLCDEATSALDPATTQSILDLLREINRELNLTILLITHEMDVVKGICSQVAIIGDGELVEKGPVGDIFAHPKTELARKFIRSTLDLSIPTDFQARMTPEKVTGSYPLIRLEFTGASVNAPLISQVAREFNIDISILSSDMDYIGGVKFGLMLAELFGTEQAAEQAIAFLRDHKVNVEVLGYVA.

In terms of domain architecture, ABC transporter spans 2-241; sequence IEINRVNKVF…PKTELARKFI (240 aa). ATP is bound at residue 38–45; that stretch reads GSSGAGKS.

Belongs to the ABC transporter superfamily. Methionine importer (TC 3.A.1.24) family. The complex is composed of two ATP-binding proteins (MetN), two transmembrane proteins (MetI) and a solute-binding protein (MetQ).

It localises to the cell inner membrane. The catalysed reaction is L-methionine(out) + ATP + H2O = L-methionine(in) + ADP + phosphate + H(+). The enzyme catalyses D-methionine(out) + ATP + H2O = D-methionine(in) + ADP + phosphate + H(+). Functionally, part of the ABC transporter complex MetNIQ involved in methionine import. Responsible for energy coupling to the transport system. The polypeptide is Methionine import ATP-binding protein MetN (Photobacterium profundum (strain SS9)).